Here is a 225-residue protein sequence, read N- to C-terminus: NAD(P)H-quinone oxidoreductase subunit K, chloroplastic (225 aa).

[4Fe-4S] cluster is bound by residues Cys-43, Cys-44, Cys-108, and Cys-139.

This sequence belongs to the complex I 20 kDa subunit family. As to quaternary structure, NDH is composed of at least 16 different subunits, 5 of which are encoded in the nucleus. The cofactor is [4Fe-4S] cluster.

It is found in the plastid. The protein localises to the chloroplast thylakoid membrane. The catalysed reaction is a plastoquinone + NADH + (n+1) H(+)(in) = a plastoquinol + NAD(+) + n H(+)(out). The enzyme catalyses a plastoquinone + NADPH + (n+1) H(+)(in) = a plastoquinol + NADP(+) + n H(+)(out). In terms of biological role, NDH shuttles electrons from NAD(P)H:plastoquinone, via FMN and iron-sulfur (Fe-S) centers, to quinones in the photosynthetic chain and possibly in a chloroplast respiratory chain. The immediate electron acceptor for the enzyme in this species is believed to be plastoquinone. Couples the redox reaction to proton translocation, and thus conserves the redox energy in a proton gradient. The protein is NAD(P)H-quinone oxidoreductase subunit K, chloroplastic of Lemna minor (Common duckweed).